A 355-amino-acid chain; its full sequence is Natterin-1 (355 aa).

The N-terminal stretch at 1–18 (MIPSVLLVTLLLLSWTSA) is a signal peptide. Positions 19–27 (EKDLKVRVA) are excised as a propeptide.

Belongs to the natterin family. In terms of processing, contains 4 disulfide bonds. Expressed by the venom gland.

It is found in the secreted. With respect to regulation, inhibited by tissue-kallikrein inhibitor TKI and trasylol. Plasma kallikrein inhibitor PKSI527 and classical inhibitors of serine-, metallo-, thiol- or aspartate-peptidases evokes a minor inhibition of the peptide digestion. Its function is as follows. Shows nociceptive, edema-inducing and kininogenase activity with release of kallidin from low molecular weight kininogen. The cleavage occurs at Met-Lys bonds. The protein is Natterin-1 of Thalassophryne nattereri (Copper Joe toadfish).